A 110-amino-acid polypeptide reads, in one-letter code: Large ribosomal subunit protein uL22 (110 aa).

The protein belongs to the universal ribosomal protein uL22 family. Part of the 50S ribosomal subunit.

In terms of biological role, this protein binds specifically to 23S rRNA; its binding is stimulated by other ribosomal proteins, e.g. L4, L17, and L20. It is important during the early stages of 50S assembly. It makes multiple contacts with different domains of the 23S rRNA in the assembled 50S subunit and ribosome. The globular domain of the protein is located near the polypeptide exit tunnel on the outside of the subunit, while an extended beta-hairpin is found that lines the wall of the exit tunnel in the center of the 70S ribosome. This is Large ribosomal subunit protein uL22 from Ruthia magnifica subsp. Calyptogena magnifica.